The sequence spans 527 residues: D-3-phosphoglycerate dehydrogenase (527 aa).

NAD(+) contacts are provided by residues arginine 149–valine 150, aspartate 169, alanine 228–arginine 230, and aspartate 254. Arginine 230 is a catalytic residue. Glutamate 259 is a catalytic residue. The Proton donor role is filled by histidine 278. Histidine 278–alanine 281 serves as a coordination point for NAD(+). An ACT domain is found at tyrosine 453–leucine 527.

This sequence belongs to the D-isomer specific 2-hydroxyacid dehydrogenase family.

It carries out the reaction (2R)-3-phosphoglycerate + NAD(+) = 3-phosphooxypyruvate + NADH + H(+). Its pathway is amino-acid biosynthesis; L-serine biosynthesis; L-serine from 3-phospho-D-glycerate: step 1/3. The protein is D-3-phosphoglycerate dehydrogenase (serA) of Archaeoglobus fulgidus (strain ATCC 49558 / DSM 4304 / JCM 9628 / NBRC 100126 / VC-16).